Reading from the N-terminus, the 299-residue chain is Probable lipid kinase YegS-like (299 aa).

The 132-residue stretch at 2–133 (SRSAGSFLIL…IDIAHVNDKT (132 aa)) folds into the DAGKc domain. ATP contacts are provided by residues Thr40, 66-72 (GDGTINE), and Thr95. Mg(2+)-binding residues include Leu215, Asp218, and Leu220. The active-site Proton acceptor is Glu271.

The protein belongs to the diacylglycerol/lipid kinase family. YegS lipid kinase subfamily. Mg(2+) is required as a cofactor. Requires Ca(2+) as cofactor.

Its subcellular location is the cytoplasm. Probably phosphorylates lipids; the in vivo substrate is unknown. The sequence is that of Probable lipid kinase YegS-like from Cronobacter sakazakii (strain ATCC BAA-894) (Enterobacter sakazakii).